The primary structure comprises 124 residues: Non-structural protein 2 (124 aa).

Residues 121–124 (DLNP) carry the DLNP; interaction with MAP1B motif.

This sequence belongs to the pneumovirus non-structural protein 2 family. Monomer (instable). Homomultimer. Heteromultimer with NS1. Interacts with host RIGI (via N-terminus); this interaction prevents host signaling pathway involved in interferon production. Interacts with host MAP1B/microtubule-associated protein 1B.

It localises to the host mitochondrion. Plays a major role in antagonizing the type I IFN-mediated antiviral response. Acts cooperatively with NS1 to repress activation and nuclear translocation of host IFN-regulatory factor IRF3. Interacts with the host cytoplasmic sensor of viral nucleic acids RIGI and prevents the interaction with its downstream partner MAVS. Together with NS2, participates in the proteasomal degradation of host STAT2, IRF3, IRF7, TBK1 and RIGI through a NS-degradasome involving CUL2 and Elongin-C. The degradasome requires an intact mitochondrial MAVS. Induces host SOCS1 expression. Induces activation of NF-kappa-B. Suppresses premature apoptosis by an NF-kappa-B-dependent, interferon-independent mechanism promoting continued viral replication. The sequence is that of Non-structural protein 2 (1B) from Human respiratory syncytial virus B (strain B1).